A 974-amino-acid chain; its full sequence is Probable proton ATPase 1A (974 aa).

Over residues 1-23 (MSSKKYELDAAAFEDKPESHSDA) the composition is skewed to basic and acidic residues. Residues 1 to 61 (MSSKKYELDA…ATDLLPPSKG (61 aa)) form a disordered region. Over 1–92 (MSSKKYELDA…KTPSWLIYVR (92 aa)) the chain is Cytoplasmic. Residues 93–112 (GLWGPMPAALWIAIIIEFAL) form a helical membrane-spanning segment. At 113–117 (ENWPD) the chain is on the extracellular side. The chain crosses the membrane as a helical span at residues 118–137 (GAILFAIQIANATIGWYETI). Residues 138 to 264 (KAGDAVAALK…LGNIHVILRR (127 aa)) lie on the Cytoplasmic side of the membrane. The chain crosses the membrane as a helical span at residues 265–286 (VMFSLCAISFMLCMCCFIYLLA). At 287–294 (RFYETFRH) the chain is on the extracellular side. The helical transmembrane segment at 295 to 321 (ALQFAVVVLVVSIPIALEIVVTTTLAV) threads the bilayer. Over 322-630 (GSKHLSKHKI…AVHGATDAAR (309 aa)) the chain is Cytoplasmic. Catalysis depends on Asp-351, which acts as the 4-aspartylphosphate intermediate. Residues Asp-605 and Asp-609 each coordinate Mg(2+). The helical transmembrane segment at 631 to 651 (AAADMVLTEPGLSVVVEAMLV) threads the bilayer. The Extracellular portion of the chain corresponds to 652–661 (SREVFQRMLS). The chain crosses the membrane as a helical span at residues 662 to 684 (FLTYRISATLQLVCFFFIACFSL). At 685–697 (TPKAYGSVDPHFQ) the chain is on the cytoplasmic side. Residues 698-712 (FFHLPVLMFMLITLL) traverse the membrane as a helical segment. The Extracellular portion of the chain corresponds to 713 to 737 (NDGCLMTIGYDHVIPSERPQKWNLP). Asp-714 contributes to the Mg(2+) binding site. Residues 738-761 (VVFVSASILAAVACGSSLMLLWIG) form a helical membrane-spanning segment. Residues 762–812 (LEGYSSQYYENSWFHRLGLAQLPQGKLVTMMYLKISISDFLTLFSSRTGGH) are Cytoplasmic-facing. The chain crosses the membrane as a helical span at residues 813–840 (FFFYMPPSPILFCGAIISLLVSTMAASF). At 841–868 (WHKSRPDNVLTEGLAWGQTNAEKLLPLW) the chain is on the extracellular side. A helical transmembrane segment spans residues 869–887 (VWIYCIVWWFVQDVVKVLA). The Cytoplasmic portion of the chain corresponds to 888 to 974 (HICMDAVDLF…VNVYVSRDQK (87 aa)). The segment covering 950 to 959 (GLREDTHSPI) has biased composition (basic and acidic residues). The disordered stretch occupies residues 950–974 (GLREDTHSPIEEASPVNVYVSRDQK).

The protein belongs to the cation transport ATPase (P-type) (TC 3.A.3) family. Type IIIA subfamily.

Its subcellular location is the membrane. The enzyme catalyses ATP + H2O + H(+)(in) = ADP + phosphate + 2 H(+)(out). This is Probable proton ATPase 1A (H1A) from Leishmania donovani.